Reading from the N-terminus, the 343-residue chain is Holliday junction branch migration complex subunit RuvB (343 aa).

Residues 1–20 are disordered; it reads MEEMASRMISGDPELGEPFQ. The tract at residues 1–185 is large ATPase domain (RuvB-L); the sequence is MEEMASRMIS…FGILARMQFY (185 aa). ATP-binding positions include Leu24, Arg25, Gly66, Lys69, Thr70, Thr71, 132–134, Arg175, Tyr185, and Arg222; that span reads EDF. Thr70 contacts Mg(2+). The tract at residues 186–256 is small ATPAse domain (RuvB-S); the sequence is EPDELQQIVT…LADRALLALE (71 aa). The segment at 259–343 is head domain (RuvB-H); it reads RNGLDNMDHR…PRPVQQGTLL (85 aa). DNA is bound by residues Arg295, Arg314, and Arg319.

This sequence belongs to the RuvB family. Homohexamer. Forms an RuvA(8)-RuvB(12)-Holliday junction (HJ) complex. HJ DNA is sandwiched between 2 RuvA tetramers; dsDNA enters through RuvA and exits via RuvB. An RuvB hexamer assembles on each DNA strand where it exits the tetramer. Each RuvB hexamer is contacted by two RuvA subunits (via domain III) on 2 adjacent RuvB subunits; this complex drives branch migration. In the full resolvosome a probable DNA-RuvA(4)-RuvB(12)-RuvC(2) complex forms which resolves the HJ.

It is found in the cytoplasm. The catalysed reaction is ATP + H2O = ADP + phosphate + H(+). Functionally, the RuvA-RuvB-RuvC complex processes Holliday junction (HJ) DNA during genetic recombination and DNA repair, while the RuvA-RuvB complex plays an important role in the rescue of blocked DNA replication forks via replication fork reversal (RFR). RuvA specifically binds to HJ cruciform DNA, conferring on it an open structure. The RuvB hexamer acts as an ATP-dependent pump, pulling dsDNA into and through the RuvAB complex. RuvB forms 2 homohexamers on either side of HJ DNA bound by 1 or 2 RuvA tetramers; 4 subunits per hexamer contact DNA at a time. Coordinated motions by a converter formed by DNA-disengaged RuvB subunits stimulates ATP hydrolysis and nucleotide exchange. Immobilization of the converter enables RuvB to convert the ATP-contained energy into a lever motion, pulling 2 nucleotides of DNA out of the RuvA tetramer per ATP hydrolyzed, thus driving DNA branch migration. The RuvB motors rotate together with the DNA substrate, which together with the progressing nucleotide cycle form the mechanistic basis for DNA recombination by continuous HJ branch migration. Branch migration allows RuvC to scan DNA until it finds its consensus sequence, where it cleaves and resolves cruciform DNA. This Magnetococcus marinus (strain ATCC BAA-1437 / JCM 17883 / MC-1) protein is Holliday junction branch migration complex subunit RuvB.